A 200-amino-acid chain; its full sequence is ATP-dependent Clp protease proteolytic subunit (200 aa).

S101 (nucleophile) is an active-site residue. Residue H126 is part of the active site.

It belongs to the peptidase S14 family. Component of the chloroplastic Clp protease core complex.

The protein localises to the plastid. It localises to the chloroplast stroma. It carries out the reaction Hydrolysis of proteins to small peptides in the presence of ATP and magnesium. alpha-casein is the usual test substrate. In the absence of ATP, only oligopeptides shorter than five residues are hydrolyzed (such as succinyl-Leu-Tyr-|-NHMec, and Leu-Tyr-Leu-|-Tyr-Trp, in which cleavage of the -Tyr-|-Leu- and -Tyr-|-Trp bonds also occurs).. Its function is as follows. Cleaves peptides in various proteins in a process that requires ATP hydrolysis. Has a chymotrypsin-like activity. Plays a major role in the degradation of misfolded proteins. This chain is ATP-dependent Clp protease proteolytic subunit, found in Ostreococcus tauri.